A 124-amino-acid polypeptide reads, in one-letter code: uncharacterized protein (124 aa).

3 consecutive transmembrane segments (helical) span residues 14–34 (KAIV…YGWQ), 41–61 (FSYG…IIFY), and 85–105 (MVFI…AFFV).

It is found in the cell membrane. This is an uncharacterized protein from Haemophilus influenzae (strain ATCC 51907 / DSM 11121 / KW20 / Rd).